A 74-amino-acid polypeptide reads, in one-letter code: Large ribosomal subunit protein bL28 (74 aa).

This sequence belongs to the bacterial ribosomal protein bL28 family.

The polypeptide is Large ribosomal subunit protein bL28 (Desulforapulum autotrophicum (strain ATCC 43914 / DSM 3382 / VKM B-1955 / HRM2) (Desulfobacterium autotrophicum)).